Here is a 313-residue protein sequence, read N- to C-terminus: MENCSFHVPSLEEICSVLKSGLLKNFADVSVIVTECPDLSKEPFEFPVKGLCGKSRIADVGGVPYLVPKPRLDKVYNVNAVAKKIGLPGAYILGAGATSHKSLGMNAELIFSVQAENESIQAVNKSYVASVNPGDGSCLLEKYRDRNNDNDFGLLSNLYACEGKPGKVIEVSVKRRIGQDNFVSCMRKSLKTHYGEKAVGLGGTFLLKEGKAKLHVMPREYSACPLNTDEDVNGWLKFYEMKAPLICQSVFVSHDPGYDLRLEHTHCFSHHGEGGHYHYDTTPDTVEYLGYFHPAELLYRIDKPSATHMVGRD.

His-264, His-266, and His-276 together coordinate Zn(2+).

As to quaternary structure, monomer. It depends on Zn(2+) as a cofactor.

Its subcellular location is the nucleus. The protein resides in the cytoplasm. Functionally, exhibits ester hydrolase activity on the substrate p-nitrophenyl acetate, in vitro. May regulate DNA damage and repair by regulating HIF1A degradation via chaperone-mediated autophagy (CMA). This chain is Ester hydrolase C11orf54 homolog, found in Xenopus tropicalis (Western clawed frog).